Reading from the N-terminus, the 217-residue chain is Small ribosomal subunit protein uS3 (217 aa).

Residues 38 to 106 (IRKFVQKELA…QVHINIIEIK (69 aa)) form the KH type-2 domain.

Belongs to the universal ribosomal protein uS3 family. Part of the 30S ribosomal subunit. Forms a tight complex with proteins S10 and S14.

In terms of biological role, binds the lower part of the 30S subunit head. Binds mRNA in the 70S ribosome, positioning it for translation. In Streptococcus pneumoniae serotype 19F (strain G54), this protein is Small ribosomal subunit protein uS3.